The chain runs to 171 residues: UPF0303 protein YPTS_2661 (171 aa).

Belongs to the UPF0303 family.

The protein is UPF0303 protein YPTS_2661 of Yersinia pseudotuberculosis serotype IB (strain PB1/+).